The chain runs to 234 residues: MDNTLKHLAIIMDGNGRWAKLKNKARAYGHKKGVKTLKDITIWCANHKLECLTLYAFSTENWKRPKSEVDFLMKMLKKYLKDERSTYLNNNIRFRAIGDLEGFSKELRDTILQLENDTRHFKDFTQVLALNYGSKNELSRAFKSLLESPPSHINLLESLENEISNRLDTHDLPEVDLLLRTGGEMRLSNFLLWQSSYAELFFTPILWPDFTPKDLENIISDFYKRVRKFGELKC.

Residue aspartate 13 is part of the active site. Position 13 (aspartate 13) interacts with Mg(2+). Residues 14–17, tryptophan 18, arginine 26, histidine 30, and 58–60 each bind substrate; these read GNGR and STE. Asparagine 61 acts as the Proton acceptor in catalysis. Residues tryptophan 62, arginine 64, arginine 180, and 186–188 contribute to the substrate site; that span reads RLS. Glutamate 199 serves as a coordination point for Mg(2+).

It belongs to the UPP synthase family. In terms of assembly, homodimer. Mg(2+) is required as a cofactor.

Its function is as follows. Catalyzes the condensation of isopentenyl diphosphate (IPP) with allylic pyrophosphates generating different type of terpenoids. This chain is Isoprenyl transferase (uppS), found in Helicobacter pylori (strain ATCC 700392 / 26695) (Campylobacter pylori).